Reading from the N-terminus, the 86-residue chain is Cytochrome c oxidase subunit 6B1 (86 aa).

The residue at position 2 (Ala2) is an N-acetylalanine. The CHCH domain maps to 27 to 73; the sequence is TRNCWQNYLDFHRCQKAMTAKGGDISVCEWYQRVYQSLCPTSWVTDW. A Cx9C motif motif is present at residues 30–40; the sequence is CWQNYLDFHRC. 2 disulfides stabilise this stretch: Cys30/Cys65 and Cys40/Cys54. The short motif at 54-65 is the Cx10C motif element; that stretch reads CEWYQRVYQSLC.

This sequence belongs to the cytochrome c oxidase subunit 6B family. Component of the cytochrome c oxidase (complex IV, CIV), a multisubunit enzyme composed of 14 subunits. The complex is composed of a catalytic core of 3 subunits MT-CO1, MT-CO2 and MT-CO3, encoded in the mitochondrial DNA, and 11 supernumerary subunits COX4I, COX5A, COX5B, COX6A, COX6B, COX6C, COX7A, COX7B, COX7C, COX8 and NDUFA4, which are encoded in the nuclear genome. The complex exists as a monomer or a dimer and forms supercomplexes (SCs) in the inner mitochondrial membrane with NADH-ubiquinone oxidoreductase (complex I, CI) and ubiquinol-cytochrome c oxidoreductase (cytochrome b-c1 complex, complex III, CIII), resulting in different assemblies (supercomplex SCI(1)III(2)IV(1) and megacomplex MCI(2)III(2)IV(2)).

It localises to the mitochondrion inner membrane. The protein operates within energy metabolism; oxidative phosphorylation. Its function is as follows. Component of the cytochrome c oxidase, the last enzyme in the mitochondrial electron transport chain which drives oxidative phosphorylation. The respiratory chain contains 3 multisubunit complexes succinate dehydrogenase (complex II, CII), ubiquinol-cytochrome c oxidoreductase (cytochrome b-c1 complex, complex III, CIII) and cytochrome c oxidase (complex IV, CIV), that cooperate to transfer electrons derived from NADH and succinate to molecular oxygen, creating an electrochemical gradient over the inner membrane that drives transmembrane transport and the ATP synthase. Cytochrome c oxidase is the component of the respiratory chain that catalyzes the reduction of oxygen to water. Electrons originating from reduced cytochrome c in the intermembrane space (IMS) are transferred via the dinuclear copper A center (CU(A)) of subunit 2 and heme A of subunit 1 to the active site in subunit 1, a binuclear center (BNC) formed by heme A3 and copper B (CU(B)). The BNC reduces molecular oxygen to 2 water molecules using 4 electrons from cytochrome c in the IMS and 4 protons from the mitochondrial matrix. The polypeptide is Cytochrome c oxidase subunit 6B1 (COX6B1) (Pongo abelii (Sumatran orangutan)).